The sequence spans 145 residues: Ventricular natriuretic peptide (145 aa).

The N-terminal stretch at methionine 1 to alanine 24 is a signal peptide. Residues cysteine 117 and cysteine 133 are joined by a disulfide bond.

Belongs to the natriuretic peptide family. In terms of tissue distribution, heart atrium and ventricle, and to a very low extent in brain.

Its subcellular location is the secreted. Its function is as follows. Exhibits natriuretic and vasodepressor activity. The polypeptide is Ventricular natriuretic peptide (vnp) (Acipenser transmontanus (White sturgeon)).